The chain runs to 402 residues: Tryptophan synthase beta chain (402 aa).

Lys-91 carries the post-translational modification N6-(pyridoxal phosphate)lysine.

The protein belongs to the TrpB family. In terms of assembly, tetramer of two alpha and two beta chains. It depends on pyridoxal 5'-phosphate as a cofactor.

It carries out the reaction (1S,2R)-1-C-(indol-3-yl)glycerol 3-phosphate + L-serine = D-glyceraldehyde 3-phosphate + L-tryptophan + H2O. It participates in amino-acid biosynthesis; L-tryptophan biosynthesis; L-tryptophan from chorismate: step 5/5. The beta subunit is responsible for the synthesis of L-tryptophan from indole and L-serine. The chain is Tryptophan synthase beta chain from Streptococcus thermophilus (strain CNRZ 1066).